Consider the following 154-residue polypeptide: 3-hydroxyacyl-[acyl-carrier-protein] dehydratase FabZ (154 aa).

Residue His-54 is part of the active site.

It belongs to the thioester dehydratase family. FabZ subfamily.

Its subcellular location is the cytoplasm. It carries out the reaction a (3R)-hydroxyacyl-[ACP] = a (2E)-enoyl-[ACP] + H2O. Functionally, involved in unsaturated fatty acids biosynthesis. Catalyzes the dehydration of short chain beta-hydroxyacyl-ACPs and long chain saturated and unsaturated beta-hydroxyacyl-ACPs. This chain is 3-hydroxyacyl-[acyl-carrier-protein] dehydratase FabZ, found in Chlamydia abortus (strain DSM 27085 / S26/3) (Chlamydophila abortus).